Reading from the N-terminus, the 328-residue chain is Malate dehydrogenase (328 aa).

11 to 17 contributes to the NAD(+) binding site; sequence GAAGQIG. 2 residues coordinate substrate: Arg94 and Arg100. NAD(+)-binding positions include Asn107, Gln114, and 131–133; that span reads VGN. Residues Asn133 and Arg164 each contribute to the substrate site. The Proton acceptor role is filled by His189.

The protein belongs to the LDH/MDH superfamily. MDH type 2 family.

The enzyme catalyses (S)-malate + NAD(+) = oxaloacetate + NADH + H(+). Catalyzes the reversible oxidation of malate to oxaloacetate. The chain is Malate dehydrogenase from Xylella fastidiosa (strain Temecula1 / ATCC 700964).